The sequence spans 143 residues: ATP synthase subunit b', chloroplastic (143 aa).

Residues 12 to 31 (LPVMGLQVVLLSWLLEQILY) form a helical membrane-spanning segment.

This sequence belongs to the ATPase B chain family. As to quaternary structure, F-type ATPases have 2 components, F(1) - the catalytic core - and F(0) - the membrane proton channel. F(1) has five subunits: alpha(3), beta(3), gamma(1), delta(1), epsilon(1). F(0) has four main subunits: a(1), b(1), b'(1) and c(10-14). The alpha and beta chains form an alternating ring which encloses part of the gamma chain. F(1) is attached to F(0) by a central stalk formed by the gamma and epsilon chains, while a peripheral stalk is formed by the delta, b and b' chains.

Its subcellular location is the plastid. It localises to the chloroplast thylakoid membrane. Functionally, f(1)F(0) ATP synthase produces ATP from ADP in the presence of a proton or sodium gradient. F-type ATPases consist of two structural domains, F(1) containing the extramembraneous catalytic core and F(0) containing the membrane proton channel, linked together by a central stalk and a peripheral stalk. During catalysis, ATP synthesis in the catalytic domain of F(1) is coupled via a rotary mechanism of the central stalk subunits to proton translocation. Its function is as follows. Component of the F(0) channel, it forms part of the peripheral stalk, linking F(1) to F(0). The b'-subunit is a diverged and duplicated form of b found in plants and photosynthetic bacteria. This Cyanidioschyzon merolae (strain NIES-3377 / 10D) (Unicellular red alga) protein is ATP synthase subunit b', chloroplastic.